A 293-amino-acid chain; its full sequence is Probable flavonol synthase 6 (293 aa).

Residues 156–253 (KAQYVMRINY…RMSWPILVEP (98 aa)) form the Fe2OG dioxygenase domain. A 2-oxoglutarate-binding site is contributed by 164-166 (NYY). Histidine 178, aspartate 180, and histidine 234 together coordinate Fe cation. Residue 244–246 (RMS) coordinates 2-oxoglutarate.

The protein belongs to the iron/ascorbate-dependent oxidoreductase family. Fe(2+) serves as cofactor.

The enzyme catalyses a (2R,3R)-dihydroflavonol + 2-oxoglutarate + O2 = a flavonol + succinate + CO2 + H2O. Its pathway is secondary metabolite biosynthesis; flavonoid biosynthesis. The polypeptide is Probable flavonol synthase 6 (FLS6) (Arabidopsis thaliana (Mouse-ear cress)).